Here is a 172-residue protein sequence, read N- to C-terminus: 18.6 kDa class III heat shock protein (172 aa).

Residues 29–54 (RRSAGDHAHHAAHGHGQHRISGIGGG) are disordered. Positions 48-172 (ISGIGGGAPV…KTKSVQVTIA (125 aa)) constitute a sHSP domain.

The protein belongs to the small heat shock protein (HSP20) family. In terms of assembly, may form oligomeric structures.

The protein localises to the cytoplasm. The sequence is that of 18.6 kDa class III heat shock protein (HSP18.6) from Oryza sativa subsp. japonica (Rice).